A 313-amino-acid chain; its full sequence is uncharacterized protein (313 aa).

2 disordered regions span residues E24 to N53 and T190 to R291. A compositionally biased stretch (polar residues) spans T211–S229. Positions S239–S260 are enriched in low complexity. Residues D261–D284 show a composition bias toward polar residues.

This is an uncharacterized protein from Saccharomyces cerevisiae (strain ATCC 204508 / S288c) (Baker's yeast).